The following is a 416-amino-acid chain: MKHRPVHERQCSTETKNWKENTQLIMQSSSGHTHHQPGSNDSPSVCMSLPVPQLSAEGSCTAGDVTIDLSSPESHHGARSSSRRVRPGNGRSLSRHGHTHSHDANGPEDANDADSREQSNSISEVFHFYKWLEKSFPYILIFSAKLVVQHITGISVGIGLLTTFLYANKCIVNQVFLRDKCSKLQCLWILVFLLFSSLLLYYTFSSQALYYSLVFMNPSLGPLHFFDALWVVGITDFIGKFFFMGLKCIILLVPSFVMSHKSKGYWYMALEEVAQCYCMLVSTPVWFRYLIDYGNQNSGAEWHFGILLALLYLILKLLIIFGQRKTSSNSLRLFLTQPNYGAAATKSQCSEVDGMCAICQAEFIKPIVLVCQHVFCEECISLWFNKEKTCPLCRTVISNQSHKWKDGATSLQLRIF.

Residues 27–45 are compositionally biased toward polar residues; sequence QSSSGHTHHQPGSNDSPSV. 2 disordered regions span residues 27 to 50 and 63 to 116; these read QSSS…MSLP and GDVT…ADSR. A compositionally biased stretch (basic residues) spans 77–86; that stretch reads GARSSSRRVR. Helical transmembrane passes span 146 to 166, 184 to 204, 214 to 234, 237 to 257, 265 to 287, and 302 to 322; these read LVVQ…TFLY, LQCL…YYTF, VFMN…VVGI, FIGK…PSFV, YWYM…PVWF, and WHFG…IIFG. The interval 349 to 400 is required for ubiquitin ligase activity and for protection against ER stress-induced cell death; sequence CSEVDGMCAICQAEFIKPIVLVCQHVFCEECISLWFNKEKTCPLCRTVISNQ. An RING-type zinc finger spans residues 356 to 394; the sequence is CAICQAEFIKPIVLVCQHVFCEECISLWFNKEKTCPLCR.

Its subcellular location is the endoplasmic reticulum membrane. It catalyses the reaction S-ubiquitinyl-[E2 ubiquitin-conjugating enzyme]-L-cysteine + [acceptor protein]-L-lysine = [E2 ubiquitin-conjugating enzyme]-L-cysteine + N(6)-ubiquitinyl-[acceptor protein]-L-lysine.. Its pathway is protein modification; protein ubiquitination. In terms of biological role, E3 ubiquitin-protein ligase that acts in the endoplasmic reticulum (ER)-associated degradation (ERAD) pathway, which targets misfolded proteins that accumulate in the endoplasmic reticulum (ER) for ubiquitination and subsequent proteasome-mediated degradation. Protects cells from ER stress-induced apoptosis. The polypeptide is E3 ubiquitin-protein ligase RNFT1 (rnft1) (Xenopus tropicalis (Western clawed frog)).